The sequence spans 322 residues: Myeloid-associated differentiation marker (322 aa).

Over residues 1–18 (MPVTVTRTTITTTTTSSS) the composition is skewed to low complexity. The segment at 1 to 21 (MPVTVTRTTITTTTTSSSGLG) is disordered. Serine 22 carries the phosphoserine modification. MARVEL domains follow at residues 31-163 (ALTQ…ARPG) and 168-319 (YMAT…HLVF). The next 8 membrane-spanning stretches (helical) occupy residues 41 to 61 (LLQLVSTCVAFSLVASVGAWT), 70 to 90 (FTWCFCFSVTLIILIVELCGL), 101 to 121 (FPITFACYAALFCLSASIIYP), 137 to 157 (AIAATFFSCIACVAYATEVAW), 171 to 191 (TVPGLLKVLETFVACIIFAFI), 203 to 223 (LEWCVAVYAICFILAAIAILL), 239 to 259 (FLSGLALLSVLLYATALVLWP), and 294 to 314 (LAVAILTAINLLAYVADLVHS).

Belongs to the MAL family. In terms of tissue distribution, widely expressed. Not detected in thymus.

It is found in the membrane. The protein is Myeloid-associated differentiation marker (MYADM) of Homo sapiens (Human).